A 789-amino-acid chain; its full sequence is Leucine-rich repeat and fibronectin type-III domain-containing protein 2 (789 aa).

Residues Met1 to Ala20 form the signal peptide. The LRRNT domain occupies Cys21 to Arg52. Residues Cys21 to Met534 lie on the Extracellular side of the membrane. N-linked (GlcNAc...) asparagine glycosylation occurs at Asn29. LRR repeat units lie at residues Arg53–Asn74, Gly77–Asp98, Ser101–Gly122, Asn125–Asp146, Thr150–Arg171, Asn174–Asp195, and Lys198–Ala219. One can recognise an LRRCT domain in the interval Asn242–Pro288. An Ig-like domain is found at Pro289–Ser375. Cys310 and Cys359 are disulfide-bonded. 3 N-linked (GlcNAc...) asparagine glycosylation sites follow: Asn332, Asn341, and Asn384. Residues Ser383–Arg424 form a disordered region. Gly residues predominate over residues Arg407–Glu416. Residues Pro421 to Asp518 form the Fibronectin type-III domain. Residues Ile535–Val555 form a helical membrane-spanning segment. The Cytoplasmic segment spans residues Arg556–Val789. 3 disordered regions span residues Ser577 to Val602, Ser619 to Asp654, and Gln668 to Pro702. Pro residues predominate over residues Gln583–Pro599. The span at Ser619–Ala638 shows a compositional bias: low complexity. Residues Arg641–Lys650 show a composition bias toward pro residues. The PDZ-binding signature appears at Glu786 to Val789.

This sequence belongs to the LRFN family. In terms of assembly, forms heteromeric complexes with LRFN1, LRFN3, LRFN4 and LRFN5. Can form homomeric complexes, but not across cell junctions. Directly interacts with 2 NMDA receptor subunits GRIN1 and GRIN2A. Interacts with DLG1, DLG2, DLG3 and DLG4. Post-translationally, glycosylated.

The protein resides in the membrane. The protein localises to the synapse. Its subcellular location is the postsynaptic cell membrane. Its function is as follows. Promotes neurite outgrowth in hippocampal neurons. Enhances the cell surface expression of 2 NMDA receptor subunits GRIN1 and GRIN2A. May play a role in redistributing DLG4 to the cell periphery. The chain is Leucine-rich repeat and fibronectin type-III domain-containing protein 2 (LRFN2) from Homo sapiens (Human).